Consider the following 1216-residue polypeptide: 1-phosphatidylinositol 4,5-bisphosphate phosphodiesterase beta-1 (1216 aa).

Cys17 carries S-palmitoyl cysteine lipidation. Position 236 is a phosphoserine (Ser236). Residues 316–467 enclose the PI-PLC X-box domain; sequence EDMSQPLSHY…LMYKILVKNK (152 aa). Residues His331 and His378 contribute to the active site. A Phosphoserine modification is found at Ser417. The disordered stretch occupies residues 469–534; the sequence is KSHKSSEGSG…MDEGTAGSEA (66 aa). The segment covering 472–483 has biased composition (basic and acidic residues); the sequence is KSSEGSGKKKLS. The segment covering 491–501 has biased composition (low complexity); that stretch reads SDSSSVFEPSS. A compositionally biased stretch (acidic residues) spans 507–518; it reads ADTESDDDDDDD. Position 509 is a phosphothreonine (Thr509). A phosphoserine mark is found at Ser511 and Ser582. One can recognise a PI-PLC Y-box domain in the interval 540 to 656; it reads MSNLVNYIQP…GYRLKPEFMR (117 aa). Residues 656 to 784 enclose the C2 domain; that stretch reads RRPDKHFDPF…CLRNERNQPL (129 aa). 4 disordered regions span residues 834–891, 933–993, 1071–1095, and 1172–1216; these read DEEE…VKAP, LVKR…IEQD, KMDK…EEEK, and KISE…DTPL. At Ser887 the chain carries Phosphoserine; by PKC. Composition is skewed to basic and acidic residues over residues 941 to 951 and 959 to 979; these read TTDLIKEHTTK and YLRR…KKSE. Ser978 and Ser987 each carry phosphoserine. The segment covering 980-991 has biased composition (polar residues); sequence PSSPDHVSSTIE. The span at 1075-1095 shows a compositional bias: basic and acidic residues; that stretch reads KRQEKITEAKSKDKSQMEEEK. Residues 1187 to 1198 are compositionally biased toward polar residues; the sequence is TSDSGKLNQKPP. Phosphoserine is present on residues Ser1199 and Ser1200. Residues 1207 to 1216 show a composition bias toward basic and acidic residues; it reads NPGKEFDTPL.

As to quaternary structure, interacts with DGKQ. Ca(2+) is required as a cofactor. Post-translationally, palmitoylated. Palmitoylation at Cys-17 by ZDHHC21 regulates the signaling activity of PLCB1 and the function of the endothelial barrier. Palmitoylation by ZDHHC21 is stimulated by inflammation.

Its subcellular location is the nucleus membrane. The protein localises to the cytoplasm. It carries out the reaction a 1,2-diacyl-sn-glycero-3-phospho-(1D-myo-inositol-4,5-bisphosphate) + H2O = 1D-myo-inositol 1,4,5-trisphosphate + a 1,2-diacyl-sn-glycerol + H(+). It catalyses the reaction a 1,2-diacyl-sn-glycero-3-phospho-(1D-myo-inositol) + H2O = 1D-myo-inositol 1-phosphate + a 1,2-diacyl-sn-glycerol + H(+). Its function is as follows. Catalyzes the hydrolysis of 1-phosphatidylinositol 4,5-bisphosphate into diacylglycerol (DAG) and inositol 1,4,5-trisphosphate (IP3) and mediates intracellular signaling downstream of G protein-coupled receptors. Regulates the function of the endothelial barrier. The protein is 1-phosphatidylinositol 4,5-bisphosphate phosphodiesterase beta-1 (PLCB1) of Bos taurus (Bovine).